Consider the following 473-residue polypeptide: 3-isopropylmalate dehydratase large subunit (473 aa).

Residues C354, C414, and C417 each coordinate [4Fe-4S] cluster.

It belongs to the aconitase/IPM isomerase family. LeuC type 1 subfamily. Heterodimer of LeuC and LeuD. [4Fe-4S] cluster serves as cofactor.

The catalysed reaction is (2R,3S)-3-isopropylmalate = (2S)-2-isopropylmalate. The protein operates within amino-acid biosynthesis; L-leucine biosynthesis; L-leucine from 3-methyl-2-oxobutanoate: step 2/4. Catalyzes the isomerization between 2-isopropylmalate and 3-isopropylmalate, via the formation of 2-isopropylmaleate. The sequence is that of 3-isopropylmalate dehydratase large subunit from Rhodopseudomonas palustris (strain BisB18).